The primary structure comprises 461 residues: Protein eva-1 (461 aa).

An N-terminal signal peptide occupies residues 1 to 22 (MNMHIVSPVLLLFWFGIIVTDG). The region spanning 55–160 (ACDGERITLS…KYLQMAYGCI (106 aa)) is the SUEL-type lectin domain. The helical transmembrane segment at 370–390 (VMCIVLAVSMAAIVVLSACII) threads the bilayer. Positions 397–429 (NKDSSRSSRRSRSRRSLETSKLVSSNYGGSITP) are disordered. Over residues 415–429 (TSKLVSSNYGGSITP) the composition is skewed to polar residues.

Belongs to the EVA1 family. Interacts with sax-3. Interacts with slt-1. Interacts (via the SUEL-type lectin domain) with madd-4. Interacts (via the transmembrane domain) with unc-40.

The protein resides in the cell membrane. In terms of biological role, acts as a receptor for slt-1. Required for the guidance of the AVM pioneer axon to the ventral nerve cord. Acts as a unc-40 coreceptor to enhance the sensitivity of unc-40 to the madd-4 midline guidance cue to guide muscle arm extensions (muscle arms) and AVM mechanosensory axons towards the dorsoventral midline. The chain is Protein eva-1 (eva-1) from Caenorhabditis elegans.